A 336-amino-acid polypeptide reads, in one-letter code: Zinc finger protein GFI1 homolog pag-3 (336 aa).

5 consecutive C2H2-type zinc fingers follow at residues 126–148 (FHCQ…QQVH), 154–176 (FECK…LLIH), 182–204 (YPCE…TYIH), 210–232 (HKCT…TRKH), and 238–260 (FACD…RESH). The tract at residues 253–290 (RRRHRESHHPGHPEECVSASQISSDLSPKGYMTPPTSN) is disordered.

May interact with transcription factor unc-3. Expressed in the BDU neurons, the touch neurons, the VA, VB and VC motor neurons, two AVF interneurons and unidentified neurons of the retrovesicular ganglion (at protein level).

The protein resides in the nucleus. It localises to the cell projection. Its subcellular location is the axon. The protein localises to the perikaryon. Transcription factor. Plays a role in the determination of neuroblast cell fate and neuronal differentiation. Negatively modulates expression of several components of dense-core vesicles (DCVs), thereby, in a DCV membrane protein ida-1-dependent manner, regulating neurosecretion. Negatively modulates the transcription of its own gene, the mechanosensory gene mec-3, and also other touch neuron-specific genes in the BDU neurons; required for coordinated movement. Required to determine the identity of BDU sensory neurons in concert with transcription factor unc-86, regulating expression of a number of genes, including transcription factors ceh-14 and ahr-1, neuropeptides flp-10, nlp-1 and nlp-15, and tyramine receptor-encoding ser-2. Acts in concert with non-canonical WNT signaling to negatively modulate transcription of mec-3 gene in BDU neurons. May act in concert with transcription factor unc-3 in motor neuron fate determination. May play a role programmed cell death. This chain is Zinc finger protein GFI1 homolog pag-3, found in Caenorhabditis elegans.